Here is a 119-residue protein sequence, read N- to C-terminus: Large ribosomal subunit protein bL20 (119 aa).

It belongs to the bacterial ribosomal protein bL20 family.

Binds directly to 23S ribosomal RNA and is necessary for the in vitro assembly process of the 50S ribosomal subunit. It is not involved in the protein synthesizing functions of that subunit. The protein is Large ribosomal subunit protein bL20 of Bradyrhizobium diazoefficiens (strain JCM 10833 / BCRC 13528 / IAM 13628 / NBRC 14792 / USDA 110).